A 297-amino-acid chain; its full sequence is Cbb3-type cytochrome c oxidase subunit CcoP (297 aa).

Residues 1–35 (MSKKPTTKKEVQTTGHQWDGIEELNTPLPRWWLWT) are Cytoplasmic-facing. A helical membrane pass occupies residues 36-56 (FYATIIWGVAYSIAMPAWPIF). Residues 57–297 (SDKATPGLLG…SYVHSLGGGQ (241 aa)) are Periplasmic-facing. Cytochrome c domains follow at residues 108–199 (YTRN…LQIS) and 206–294 (VKAT…HSLG). Heme c contacts are provided by Cys121, Cys124, His125, Met174, Cys219, Cys222, His223, and Met264.

It belongs to the CcoP / FixP family. As to quaternary structure, component of the cbb3-type cytochrome c oxidase at least composed of CcoN, CcoO, CcoQ and CcoP. Interacts with CcoQ. Requires heme c as cofactor.

Its subcellular location is the cell inner membrane. It participates in energy metabolism; oxidative phosphorylation. C-type cytochrome. Part of the cbb3-type cytochrome c oxidase complex. CcoP subunit is required for transferring electrons from donor cytochrome c via its heme groups to CcoO subunit. From there, electrons are shuttled to the catalytic binuclear center of CcoN subunit where oxygen reduction takes place. The complex also functions as a proton pump. In Rhodobacter capsulatus (Rhodopseudomonas capsulata), this protein is Cbb3-type cytochrome c oxidase subunit CcoP.